Consider the following 636-residue polypeptide: MLKITLKDGSVKEIEKGSNVLDLAKSISNRLAKEAVGAKVDGKTVGLNKELNENCEVEILSFEDDEGCDIYRHTSSHILAHAVKRLYDNVKLGIGPPIKDGFYYDFDLEHSLSDKDLEDIKKEMKKIIKEDLPIERKVYKRDEAIEMFKEMGEDYKIELIQDLGEDEEICCYQQGDFIDLCQGPHLPSTGKIKDTALDLLKVAGAYWRGDENRAMLQRIYGTSFIKKSQLEEYIQRLEEAKKREHRKLGKELDLFSFHEEAPGSPFFHNNGMIVINELIDFWRREHRKAGYQEISTPIILNRGLWERSGHWDHFQENMYFTEIDDEDFAVKPMNCPGAMLVYNNNMYSYRDFPLRVAELGKVHRHELSGALHGLLRARSFTQDDAHIFMLPSQVEEELENVINLVDRFYSVFGFNYYVELSTKPEKAMGSDEIWDRAINALKSVLEKRGIKYIVNEGDGAFYGPKIDFQLEDAIGRSWQCSTIQLDFLLPERFDLTYIGEDGQKHRPVMIHRVIYGAIERFFALLIEHYEGKFPLWLAPRQAVIIPIADRHMEYGKDITKQLESEGIRADLDQRNEKIGYKIRDAQLKKVPYMLIVGDDEVENKTVSVRTREDGDIGSKSVAELVDEIKVEIDDMD.

A TGS domain is found at 1–61 (MLKITLKDGS…NENCEVEILS (61 aa)). The segment at 244 to 534 (EHRKLGKELD…LIEHYEGKFP (291 aa)) is catalytic. Residues Cys335, His386, and His511 each coordinate Zn(2+).

Belongs to the class-II aminoacyl-tRNA synthetase family. As to quaternary structure, homodimer. Zn(2+) serves as cofactor.

It is found in the cytoplasm. It catalyses the reaction tRNA(Thr) + L-threonine + ATP = L-threonyl-tRNA(Thr) + AMP + diphosphate + H(+). In terms of biological role, catalyzes the attachment of threonine to tRNA(Thr) in a two-step reaction: L-threonine is first activated by ATP to form Thr-AMP and then transferred to the acceptor end of tRNA(Thr). Also edits incorrectly charged L-seryl-tRNA(Thr). This is Threonine--tRNA ligase from Natranaerobius thermophilus (strain ATCC BAA-1301 / DSM 18059 / JW/NM-WN-LF).